Consider the following 1596-residue polypeptide: SET-binding protein (1596 aa).

Residues Met1 to Gln12 are compositionally biased toward polar residues. Disordered regions lie at residues Met1–Gly83, Lys134–Ala426, and Ser475–Leu518. Basic and acidic residues predominate over residues Gly64–Val81. The span at Leu164 to Lys175 shows a compositional bias: low complexity. Polar residues-rich tracts occupy residues Lys213–Phe236 and Ala270–Lys282. Low complexity predominate over residues Ala290–Ala306. Residues Asp363–Tyr372 show a composition bias toward basic and acidic residues. A compositionally biased stretch (polar residues) spans Asp375–Asn395. Positions Lys584–Leu596 form a DNA-binding region, a.T hook 1. Disordered regions lie at residues Gly604–Lys624, Tyr722–Ser763, and His777–Glu796. Residues Leu779–Glu796 are compositionally biased toward polar residues. Residue Lys817 is modified to N6-acetyllysine. Over residues Ser854–Asp880 the composition is skewed to polar residues. Residues Ser854–Arg889 are disordered. Residues Lys1016–Thr1028 constitute a DNA-binding region (a.T hook 2). Disordered stretches follow at residues Pro1134 to Leu1164, Glu1202 to Asn1225, Ala1245 to Arg1300, Ser1325 to Gln1344, Gln1440 to Pro1473, and Glu1518 to Pro1596. Over residues Arg1146 to Lys1159 the composition is skewed to basic residues. Over residues Val1450–Lys1459 the composition is skewed to basic residues. The segment at residues Lys1451–Gln1463 is a DNA-binding region (a.T hook 3). Tandem repeats lie at residues Pro1520–Pro1527, Pro1528–Pro1535, and Pro1536–Pro1543. Residues Pro1520–Pro1543 are 3 X 8 AA tandem repeats of P-P-L-P-P-P-P-P. 2 stretches are compositionally biased toward pro residues: residues Pro1520–Lys1546 and Pro1560–Pro1572.

In terms of assembly, interacts with SET. In terms of tissue distribution, expressed in numerous tissues. Expressed at low levels in myeloid and monocytic cells as well as in CD34+ cells; expression levels are higher in myeloid malignancies.

It is found in the nucleus. This chain is SET-binding protein (SETBP1), found in Homo sapiens (Human).